A 2533-amino-acid polypeptide reads, in one-letter code: Highly reducing polyketide synthase azaB (2533 aa).

The Ketosynthase family 3 (KS3) domain maps to 7–433; it reads TAPMAIIGMA…GSNAHAILES (427 aa). Catalysis depends on for beta-ketoacyl synthase activity residues cysteine 180, histidine 315, and histidine 355. The tract at residues 554 to 821 is malonyl-CoA:ACP transacylase (MAT) domain; it reads WVFTGQGAQW…VEFESSFRHM (268 aa). The tract at residues 946–1081 is N-terminal hotdog fold; that stretch reads SDLVGYSQPS…GRISVITTSD (136 aa). A PKS/mFAS DH domain is found at 946–1254; it reads SDLVGYSQPS…CQSLGRALDR (309 aa). The interval 947–1251 is dehydratase (DH) domain; that stretch reads DLVGYSQPSI…GLTCQSLGRA (305 aa). Histidine 978 serves as the catalytic Proton acceptor; for dehydratase activity. A C-terminal hotdog fold region spans residues 1097–1254; sequence YNRRIDPRYM…CQSLGRALDR (158 aa). Aspartate 1163 (proton donor; for dehydratase activity) is an active-site residue. Residues 1419–1554 form a methyltransferase (CMet) domain region; that stretch reads TRQVSELVRL…GGKLILMETT (136 aa). An enoyl reductase (ER) domain region spans residues 1839 to 2155; the sequence is GLIDTLVFHD…TGQHMGKIII (317 aa). The segment at 2178-2349 is ketoreductase (KR) domain; it reads ASYVIVGGLG…AVSLDLGIVR (172 aa). One can recognise a Carrier domain in the interval 2455-2532; sequence DAAALICQEL…DLSLRVATKR (78 aa). Serine 2492 bears the O-(pantetheine 4'-phosphoryl)serine mark.

It participates in secondary metabolite biosynthesis. Functionally, highly reducing polyketide synthase; part of the gene cluster that mediates the biosynthesis of azaphilones, a class of fungal metabolites characterized by a highly oxygenated pyrano-quinone bicyclic core and exhibiting a broad range of bioactivities. In the first step, the non-reducing polyketide synthase azaA forms the hexaketide precursor from successive condensations of five malonyl-CoA units, presumably with a simple acetyl-CoA starter unit. The reactive polyketide chain then undergoes a PT-mediated C2-C7 cyclization to afford the aromatic ring and is eventually released as an aldehyde through the R-domain. The putative ketoreductase azaE is proposed to catalyze the reduction of the terminal ketone resulting in the early culture product FK17-P2a. The monooxygenase azaH was demonstrated to be the only enzyme required to convert FK17-P2a to azanigerone E. AzaH first hydroxylates the benzaldehyde intermediate FK17-P2a at C4, which triggers the formation of the pyran-ring to afford azanigerone E. In parallel, the 2,4-dimethylhexanoyl chain is synthesized by the HR-PKS azaB and is proposed to be transferred to the C4-hydroxyl of azanigerone E by the acyltransferase azaD directly from the ACP domain of azaB. Alternatively, the 2,4-dimethyl-hexanoyl chain may be offloaded from the HR-PKS as a carboxylic acid and converted to an acyl-CoA by azaF. The resulting acyl-CoA molecule could then be taken up as a substrate by AzaD to form azanigerone B. To yield the carboxylic acid substituent in azanigerone A, the hydroxypropyl side chain of azanigerone B would need to undergo a C-C oxidative cleavage catalyzed by cytochrome P450 AzaI. AzaI is proposed to act on a vicinal diol that leads to a C-C bond scission either through an alkoxyradical intermediate or a peroxy complex. In the biosynthesis of azanigerone A, azanigerone B first undergoes hydroxylation at C10, possibly catalyzed by one of the two FAD-dependent monooxygenases encoded in the cluster, azaG or azaL, resulting in the vicinal diol azanigerone C. Oxidative cleavage of azanigerone C by azaI would yield the corresponding aldehyde derivative of azanigerone A. Finally, the dehydrogenase azaJ is proposed to convert the aldehyde functional group into the carboxylic acid, completing the conversion from azanigerone B to azanigerone A. Alternatively, the oxidation of aldehyde to carboxylic acid may be catalyzed by the same P450 enzyme azaI via consecutive oxidation or by endogenous alcohol dehydrogenase. The sequence is that of Highly reducing polyketide synthase azaB from Aspergillus niger (strain ATCC 1015 / CBS 113.46 / FGSC A1144 / LSHB Ac4 / NCTC 3858a / NRRL 328 / USDA 3528.7).